A 115-amino-acid chain; its full sequence is NADH-ubiquinone oxidoreductase chain 3 (115 aa).

3 consecutive transmembrane segments (helical) span residues 3–23 (LFIMLTMSSITVSIVVALNLL), 55–75 (FFMVGILFLLFDLEIAILLPL), and 87–107 (TITWAIIIFLFLFIGLAYEWL).

Belongs to the complex I subunit 3 family.

The protein resides in the mitochondrion membrane. It catalyses the reaction a ubiquinone + NADH + 5 H(+)(in) = a ubiquinol + NAD(+) + 4 H(+)(out). In terms of biological role, core subunit of the mitochondrial membrane respiratory chain NADH dehydrogenase (Complex I) that is believed to belong to the minimal assembly required for catalysis. Complex I functions in the transfer of electrons from NADH to the respiratory chain. The immediate electron acceptor for the enzyme is believed to be ubiquinone. This chain is NADH-ubiquinone oxidoreductase chain 3 (MT-ND3), found in Alligator mississippiensis (American alligator).